A 1115-amino-acid polypeptide reads, in one-letter code: MEENSSELDSNNFNVLVDNLAGLSLTDEEVRRILSPRKEGSRQLPSSTSKDEDSEEASHKYDFEIDRDSLKSDSGSPRLHQNATAPTSSTPLQSPDESVNKLNSEDEEGNSSVAPFFLDTTNFDRLNDNITTDDEQLSPVLTANQGFQSQEQYEEDSYNNYDYTSDPSSPNYISSSLDQLPHLDDEDDLQLTPIKEERNYLHSQDAPTTNALSKKISDILIPASAMKDLKDRKNALAKEFEESQPGSSLTLKEQANVIDNLRKEVFGLKLKCYFLYDQLNKFHDQEVQDIMKQNIDLKTLTMELQRAVAGYEKKISGLESRIKPDQSFNLSTPSPAPSNLITLQSRYSQALSELETTKRAFAALRKEKSKKTNYSVGAYNEDRNVLSNMLDNERREKEALLQELESLRVQLSKKVPMPAKNTDERVIETLQRSNELLRMDISMQNEALLLRKQENDRLVKQVEELTVALNSGKMNAIVEAESSKNELWDSMMVSRMKTQEQSIELTRLYKQLQDIEEDYENKLMRMEQQWREDVDQLQEYVEEITQELQDTKEVLSKSSKESDDYEEVVGKLRTEAEREIEKFEKTIRENEESISLFKEEVEKLTDEITQLSERYNDKCHEFDELQKRLQTLEEENNKAKEDSTSKTSNLLEQLKMTEAEVDSLRKENEENKQVIALKESELVKSNDNKLLLNEQIESLNDQLSQLKTEMESVTTSKESLADYLSNLKERHNDELDSLNKKLREFEGILSSNSSLKSEIEERNNQYVTLRENFDSLQNAIMETFDKQVTHCSVNHLVQQIRKLKDENKKDQSGTDKLMKKIYHCEQSLKEKTNSLETLVSEKKELKNLLDAERRSKKAIQLELENLSSQAFRRNLSGSSSPSERSQSRELKLLQASEKRLKEQVEERNSLIKNIVTRFTQLNTGSKPVNTNVEALTTISSMNQAVNMNFRELDKSIQEFKRKCQSMEREFKTELRKLDGVLEARSKRLSQLEERVKLLGAGSTSSIPNSPRASKRVSLDSEDKKLVPASPDKSAVQRGITALKRDAEGMSHIWQLRLREMEFQLKAEQEGRKRDKLGARERLQDLIRQNRSLSRQIKTDKESNSRSPSISSQEHK.

The disordered stretch occupies residues Leu25–Leu180. Composition is skewed to basic and acidic residues over residues Glu28–Ser41 and Glu56–Lys71. Polar residues-rich tracts occupy residues Ser72–Leu102, Asp119–Ile130, and Pro139–Glu151. Residue Ser94 is modified to Phosphoserine. Over residues Ser165–Ser176 the composition is skewed to low complexity. Positions Asn445–Val915 form a coiled coil. A required for interaction with mto2 region spans residues Leu523–Leu537. Residues Gly1001–Arg1011 are compositionally biased toward polar residues. 2 disordered regions span residues Gly1001–Arg1037 and Glu1067–Lys1115. 2 positions are modified to phosphoserine: Ser1005 and Ser1009. Basic and acidic residues-rich tracts occupy residues Val1016 to Leu1025 and Glu1067 to Asp1084. Residues Lys1072–Ser1102 adopt a coiled-coil conformation. 2 stretches are compositionally biased toward polar residues: residues Ile1086–Gln1095 and Ser1104–Lys1115.

In terms of assembly, interacts with mto2; the interaction is direct and required for efficient binding to the gamma-tubulin complex. Interacts with gamma tubulin complex subunits alp4, alp6 and gtb1. Interacts with mcp6.

It localises to the cytoplasm. Its subcellular location is the cytoskeleton. The protein localises to the microtubule organizing center. The protein resides in the spindle pole body. Functionally, spindle pole body (SPB) component that acts as the gamma-tubulin complex-binding protein of the SPB outer plaque. Promotes nucleation of all cytoplasmic microtubules by recruiting the gamma-tubulin complex to the spindle pole body (SPB), to the interphase microtubule organizing center (iMTOC), and to the equatorial MTOC (eMTOC) during anaphase. The polypeptide is Gamma tubulin complex adapter mto1 (Schizosaccharomyces pombe (strain 972 / ATCC 24843) (Fission yeast)).